The following is a 311-amino-acid chain: DNA replication terminus site-binding protein (311 aa).

The protein belongs to the Tus family.

It localises to the cytoplasm. In terms of biological role, trans-acting protein required for termination of DNA replication. Binds to DNA replication terminator sequences (terA to terF) to prevent the passage of replication forks. The termination efficiency will be affected by the affinity of this protein for the terminator sequence. The protein is DNA replication terminus site-binding protein of Yersinia pseudotuberculosis serotype I (strain IP32953).